The primary structure comprises 571 residues: Urease subunit alpha (571 aa).

Residues glycine 133–phenylalanine 571 enclose the Urease domain. Ni(2+)-binding residues include histidine 138, histidine 140, and lysine 221. An N6-carboxylysine modification is found at lysine 221. Histidine 223 is a binding site for substrate. Ni(2+) contacts are provided by histidine 250 and histidine 276. Catalysis depends on histidine 324, which acts as the Proton donor. Residue aspartate 364 participates in Ni(2+) binding.

It belongs to the metallo-dependent hydrolases superfamily. Urease alpha subunit family. In terms of assembly, heterotrimer of UreA (gamma), UreB (beta) and UreC (alpha) subunits. Three heterotrimers associate to form the active enzyme. Ni cation is required as a cofactor. Post-translationally, carboxylation allows a single lysine to coordinate two nickel ions.

The protein resides in the cytoplasm. The enzyme catalyses urea + 2 H2O + H(+) = hydrogencarbonate + 2 NH4(+). Its pathway is nitrogen metabolism; urea degradation; CO(2) and NH(3) from urea (urease route): step 1/1. This is Urease subunit alpha from Staphylococcus carnosus (strain TM300).